Reading from the N-terminus, the 228-residue chain is U1 small nuclear ribonucleoprotein C (228 aa).

Residues 11-43 form a Matrin-type; degenerate zinc finger; sequence ATVDYCDIFLTHDSASVRKAHNTGWKHKMQVEH. Residues 83–127 are disordered; sequence GQRGQPVGGPPRPPQPFHNGGRPGPPGRPPMGMFPPQRPMMPPPH. A compositionally biased stretch (pro residues) spans 105–127; sequence PGPPGRPPMGMFPPQRPMMPPPH.

The protein belongs to the U1 small nuclear ribonucleoprotein C family. In terms of assembly, U1 snRNP is composed of the 7 core Sm proteins B/B', D1, D2, D3, E, F and G that assemble in a heptameric protein ring on the Sm site of the small nuclear RNA to form the core snRNP, and at least 3 U1 snRNP-specific proteins U1-70K, U1-A and U1-C. U1-C interacts with U1 snRNA and the 5' splice-site region of the pre-mRNA.

It is found in the nucleus. In terms of biological role, component of the spliceosomal U1 snRNP, which is essential for recognition of the pre-mRNA 5' splice-site and the subsequent assembly of the spliceosome. U1-C is directly involved in initial 5' splice-site recognition for both constitutive and regulated alternative splicing. The interaction with the 5' splice-site seems to precede base-pairing between the pre-mRNA and the U1 snRNA. Stimulates commitment or early (E) complex formation by stabilizing the base pairing of the 5' end of the U1 snRNA and the 5' splice-site region. In Batrachochytrium dendrobatidis (strain JAM81 / FGSC 10211) (Frog chytrid fungus), this protein is U1 small nuclear ribonucleoprotein C.